The primary structure comprises 406 residues: Tryptophan synthase beta chain (406 aa).

Lysine 97 carries the post-translational modification N6-(pyridoxal phosphate)lysine.

The protein belongs to the TrpB family. Tetramer of two alpha and two beta chains. It depends on pyridoxal 5'-phosphate as a cofactor.

It carries out the reaction (1S,2R)-1-C-(indol-3-yl)glycerol 3-phosphate + L-serine = D-glyceraldehyde 3-phosphate + L-tryptophan + H2O. It participates in amino-acid biosynthesis; L-tryptophan biosynthesis; L-tryptophan from chorismate: step 5/5. In terms of biological role, the beta subunit is responsible for the synthesis of L-tryptophan from indole and L-serine. This Lacticaseibacillus paracasei (strain ATCC 334 / BCRC 17002 / CCUG 31169 / CIP 107868 / KCTC 3260 / NRRL B-441) (Lactobacillus paracasei) protein is Tryptophan synthase beta chain.